A 157-amino-acid chain; its full sequence is Heat shock 22 kDa protein, chloroplastic (157 aa).

Residues 40 to 155 enclose the sHSP domain; sequence GKAGHTHAPM…KPEPKRIAVT (116 aa).

Belongs to the small heat shock protein (HSP20) family.

It localises to the plastid. Its subcellular location is the chloroplast. The polypeptide is Heat shock 22 kDa protein, chloroplastic (Chlamydomonas reinhardtii (Chlamydomonas smithii)).